We begin with the raw amino-acid sequence, 456 residues long: Probable glycine dehydrogenase (decarboxylating) subunit 1 (456 aa).

This sequence belongs to the GcvP family. N-terminal subunit subfamily. In terms of assembly, the glycine cleavage system is composed of four proteins: P, T, L and H. In this organism, the P 'protein' is a heterodimer of two subunits.

The enzyme catalyses N(6)-[(R)-lipoyl]-L-lysyl-[glycine-cleavage complex H protein] + glycine + H(+) = N(6)-[(R)-S(8)-aminomethyldihydrolipoyl]-L-lysyl-[glycine-cleavage complex H protein] + CO2. The glycine cleavage system catalyzes the degradation of glycine. The P protein binds the alpha-amino group of glycine through its pyridoxal phosphate cofactor; CO(2) is released and the remaining methylamine moiety is then transferred to the lipoamide cofactor of the H protein. In Legionella pneumophila subsp. pneumophila (strain Philadelphia 1 / ATCC 33152 / DSM 7513), this protein is Probable glycine dehydrogenase (decarboxylating) subunit 1.